Consider the following 259-residue polypeptide: GTP cyclohydrolase FolE2 (259 aa).

The protein belongs to the GTP cyclohydrolase IV family.

It carries out the reaction GTP + H2O = 7,8-dihydroneopterin 3'-triphosphate + formate + H(+). The protein operates within cofactor biosynthesis; 7,8-dihydroneopterin triphosphate biosynthesis; 7,8-dihydroneopterin triphosphate from GTP: step 1/1. In terms of biological role, converts GTP to 7,8-dihydroneopterin triphosphate. The protein is GTP cyclohydrolase FolE2 of Thermosipho melanesiensis (strain DSM 12029 / CIP 104789 / BI429).